Here is a 281-residue protein sequence, read N- to C-terminus: MNFTKTDFVISMGMTIAVIFMSFTFPALGMTGDSVQENEIPEFNITKGSADFAREQPEYPARPSEGTLTYKNNSANWADGRQTYLQKGDTEYLVSFFDNSDNQNPPEWKLNLIKFNSSGSYSESTIITEGESKTLTSADGSYEIGFNNLEIEDSAVGNETASVDWKVLEQPSDSTWIGRLPVVGGLISGANQLASVVGWIGAIIWHFVVQILVTIGNTLLIFYNIFVYFLEFMYWITTAYSGVVAGAPTAWASVIVAIPGILLGFEFVKLVALAISLLPLT.

Hydrophobic stretches follow at residues 8–28 (FVISMGMTIAVIFMSFTFPAL), 196–216 (VVGWIGAIIWHFVVQILVTIG), 219–239 (LLIFYNIFVYFLEFMYWITTA), and 255–275 (IVAIPGILLGFEFVKLVALAI).

Its subcellular location is the virion. This Haloarcula hispanica (His1V) protein is Structural protein 26.